Reading from the N-terminus, the 487-residue chain is GTPase Der (487 aa).

EngA-type G domains lie at 3–167 and 203–378; these read FTLA…EGFA and LQIA…DIWN. Residues 9–16, 56–60, 119–122, 209–216, 256–260, and 321–324 each bind GTP; these read GRPNVGKS, DTAGL, NKAE, GRPNAGKS, DTAGM, and NKWD. Residues 379-463 enclose the KH-like domain; that stretch reads RRITTARLNT…PIRLTMRGQG (85 aa). The interval 451-487 is disordered; that stretch reads PGTPIRLTMRGQGDKNPFKERKFRTPSRLRKHLGKKD. Residues 471–487 show a composition bias toward basic residues; that stretch reads RKFRTPSRLRKHLGKKD.

It belongs to the TRAFAC class TrmE-Era-EngA-EngB-Septin-like GTPase superfamily. EngA (Der) GTPase family. Associates with the 50S ribosomal subunit.

Its function is as follows. GTPase that plays an essential role in the late steps of ribosome biogenesis. In Cereibacter sphaeroides (strain ATCC 17029 / ATH 2.4.9) (Rhodobacter sphaeroides), this protein is GTPase Der.